Reading from the N-terminus, the 95-residue chain is Small ribosomal subunit protein bS6 (95 aa).

It belongs to the bacterial ribosomal protein bS6 family.

Its function is as follows. Binds together with bS18 to 16S ribosomal RNA. The protein is Small ribosomal subunit protein bS6 of Clostridium novyi (strain NT).